Reading from the N-terminus, the 394-residue chain is 3-dehydroquinate synthase (394 aa).

Residues 112 to 116 (GVIGD), 136 to 137 (TT), Lys-149, Lys-158, and 176 to 179 (TLAT) each bind NAD(+). Glu-191, His-254, and His-276 together coordinate Zn(2+). Residues 371-388 (STNQHTTYSPHQHATTKP) are compositionally biased toward polar residues. The tract at residues 371-394 (STNQHTTYSPHQHATTKPPNRRPH) is disordered.

Belongs to the sugar phosphate cyclases superfamily. Dehydroquinate synthase family. It depends on NAD(+) as a cofactor. The cofactor is Co(2+). Requires Zn(2+) as cofactor.

The protein localises to the cytoplasm. It catalyses the reaction 7-phospho-2-dehydro-3-deoxy-D-arabino-heptonate = 3-dehydroquinate + phosphate. It participates in metabolic intermediate biosynthesis; chorismate biosynthesis; chorismate from D-erythrose 4-phosphate and phosphoenolpyruvate: step 2/7. Catalyzes the conversion of 3-deoxy-D-arabino-heptulosonate 7-phosphate (DAHP) to dehydroquinate (DHQ). This Xylella fastidiosa (strain 9a5c) protein is 3-dehydroquinate synthase.